The chain runs to 213 residues: Putative manganese efflux pump MntP (213 aa).

The next 7 helical transmembrane spans lie at 6-26 (LGVL…GIGM), 34-54 (AFML…FGIL), 58-78 (ALGL…LFFL), 107-127 (GSGG…LFAP), 132-152 (LVVI…SLGT), 153-173 (VGAQ…IMTV), and 192-212 (LAGG…SASP).

The protein belongs to the MntP (TC 9.B.29) family.

It localises to the cell membrane. Its function is as follows. Probably functions as a manganese efflux pump. This is Putative manganese efflux pump MntP from Heliobacterium modesticaldum (strain ATCC 51547 / Ice1).